The primary structure comprises 159 residues: Peptide deformylase (159 aa).

Residues cysteine 88 and histidine 130 each coordinate Fe cation. Glutamate 131 is a catalytic residue. Position 134 (histidine 134) interacts with Fe cation.

This sequence belongs to the polypeptide deformylase family. The cofactor is Fe(2+).

It carries out the reaction N-terminal N-formyl-L-methionyl-[peptide] + H2O = N-terminal L-methionyl-[peptide] + formate. Its function is as follows. Removes the formyl group from the N-terminal Met of newly synthesized proteins. Requires at least a dipeptide for an efficient rate of reaction. N-terminal L-methionine is a prerequisite for activity but the enzyme has broad specificity at other positions. This chain is Peptide deformylase, found in Thermoanaerobacter pseudethanolicus (strain ATCC 33223 / 39E) (Clostridium thermohydrosulfuricum).